Consider the following 213-residue polypeptide: MKAYQRQFIEFALSKQVLKFGEFTLKSGRISPYFFNAGLFNTGRDLALLGRFYAEALVDSGVEFDLLFGPAYKGIPIATTAAVALAEHHDRDLPYCFNRKEAKDHGEGGSLVGSPLQGRVMLVDDVITAGTAIRESMAIISAHGATLAGVMIALDRQERGRADLSAIQEVERDYQCKVISIITLKELIAYLAEKPEMAAHLDAVKAYREQFGV.

K26 is a binding site for 5-phospho-alpha-D-ribose 1-diphosphate. 34 to 35 (FF) provides a ligand contact to orotate. 5-phospho-alpha-D-ribose 1-diphosphate contacts are provided by residues 72–73 (YK), R99, K100, K103, H105, and 124–132 (DDVITAGTA). Positions 128 and 156 each coordinate orotate.

This sequence belongs to the purine/pyrimidine phosphoribosyltransferase family. PyrE subfamily. In terms of assembly, homodimer. Mg(2+) serves as cofactor.

The enzyme catalyses orotidine 5'-phosphate + diphosphate = orotate + 5-phospho-alpha-D-ribose 1-diphosphate. It functions in the pathway pyrimidine metabolism; UMP biosynthesis via de novo pathway; UMP from orotate: step 1/2. Its function is as follows. Catalyzes the transfer of a ribosyl phosphate group from 5-phosphoribose 1-diphosphate to orotate, leading to the formation of orotidine monophosphate (OMP). The sequence is that of Orotate phosphoribosyltransferase from Pectobacterium carotovorum subsp. carotovorum (strain PC1).